Reading from the N-terminus, the 441-residue chain is pH-response regulator protein palC (441 aa).

A BRO1 domain is found at 3–352 (ISYTGQLPTT…GAAYAAILQL (350 aa)). 2 disordered regions span residues 278 to 304 (RKDD…TSSG) and 414 to 441 (KWTP…GSYY).

This sequence belongs to the palC family.

In terms of biological role, required for the proteolytic cleavage of the transcription factor RIM101 in response to alkaline ambient pH. The protein is pH-response regulator protein palC of Yarrowia lipolytica (strain CLIB 122 / E 150) (Yeast).